A 112-amino-acid chain; its full sequence is uncharacterized protein (112 aa).

A helical transmembrane segment spans residues 75–95 (ILGVFGGFIYILTPLPIVSGF).

The protein localises to the membrane. This is an uncharacterized protein from Methanocaldococcus jannaschii (strain ATCC 43067 / DSM 2661 / JAL-1 / JCM 10045 / NBRC 100440) (Methanococcus jannaschii).